A 71-amino-acid polypeptide reads, in one-letter code: Protein translocase subunit SecE (71 aa).

A helical transmembrane segment spans residues 43–63 (VAGAGILAVGAIGFIIYVLLT).

Belongs to the SecE/SEC61-gamma family. In terms of assembly, component of the Sec protein translocase complex. Heterotrimer consisting of SecY (alpha), SecG (beta) and SecE (gamma) subunits. The heterotrimers can form oligomers, although 1 heterotrimer is thought to be able to translocate proteins. Interacts with the ribosome. May interact with SecDF, and other proteins may be involved.

It is found in the cell membrane. Essential subunit of the Sec protein translocation channel SecYEG. Clamps together the 2 halves of SecY. May contact the channel plug during translocation. The protein is Protein translocase subunit SecE of Methanosarcina acetivorans (strain ATCC 35395 / DSM 2834 / JCM 12185 / C2A).